The primary structure comprises 180 residues: Large ribosomal subunit protein uL22 (180 aa).

Disordered regions lie at residues 1 to 20 (MTKPVYSKTPSNPEKSCKSR) and 160 to 180 (PKPAEESAQKKKSVATQEISA). Residues 8-20 (KTPSNPEKSCKSR) show a composition bias toward polar residues.

It belongs to the universal ribosomal protein uL22 family.

The sequence is that of Large ribosomal subunit protein uL22 (rpl17) from Dictyostelium discoideum (Social amoeba).